Here is a 297-residue protein sequence, read N- to C-terminus: Craniofacial development protein 1 (297 aa).

Composition is skewed to acidic residues over residues 1-18 (MEEFDSEDFSTSEEDEDY) and 25-43 (YSEDDVNELVKEDEVDGEE). Disordered stretches follow at residues 1–154 (MEEF…ELEK) and 190–221 (FFKQNEKEKPQTNVPAALPSLPAGSGLKRSSG). Positions 48–65 (TKGKKRKAQSIPARKRKQ) are enriched in basic residues. Over residues 69 to 78 (LEEEEEDANE) the composition is skewed to acidic residues. 3 positions are modified to phosphoserine: S80, S83, and S84. Residues 93–110 (EQEKGIGAEDARKKKEDE) show a composition bias toward basic and acidic residues. S114 carries the phosphoserine modification. A Glycyl lysine isopeptide (Lys-Gly) (interchain with G-Cter in SUMO2) cross-link involves residue K148. Positions 176-215 (VTKEVDATSKEAKSFFKQNEKEKPQTNVPAALPSLPAGSG) are hydrophilic. The span at 190–199 (FFKQNEKEKP) shows a compositional bias: basic and acidic residues. S214 carries the phosphoserine modification. The region spanning 216–297 (LKRSSGMSNL…RDLRLSKMKP (82 aa)) is the BCNT-C domain. Position 217 is an N6-methyllysine (K217). S248 is modified (phosphoserine).

The protein resides in the chromosome. It is found in the centromere. The protein localises to the kinetochore. In terms of biological role, may play a role during embryogenesis. The sequence is that of Craniofacial development protein 1 (CFDP1) from Camelus dromedarius (Dromedary).